Reading from the N-terminus, the 379-residue chain is UDP-4-amino-4-deoxy-L-arabinose--oxoglutarate aminotransferase (379 aa).

Lysine 182 bears the N6-(pyridoxal phosphate)lysine mark.

It belongs to the DegT/DnrJ/EryC1 family. ArnB subfamily. As to quaternary structure, homodimer. Pyridoxal 5'-phosphate is required as a cofactor.

It catalyses the reaction UDP-4-amino-4-deoxy-beta-L-arabinose + 2-oxoglutarate = UDP-beta-L-threo-pentopyranos-4-ulose + L-glutamate. It participates in nucleotide-sugar biosynthesis; UDP-4-deoxy-4-formamido-beta-L-arabinose biosynthesis; UDP-4-deoxy-4-formamido-beta-L-arabinose from UDP-alpha-D-glucuronate: step 2/3. Its pathway is bacterial outer membrane biogenesis; lipopolysaccharide biosynthesis. Catalyzes the conversion of UDP-4-keto-arabinose (UDP-Ara4O) to UDP-4-amino-4-deoxy-L-arabinose (UDP-L-Ara4N). The modified arabinose is attached to lipid A and is required for resistance to polymyxin and cationic antimicrobial peptides. The sequence is that of UDP-4-amino-4-deoxy-L-arabinose--oxoglutarate aminotransferase from Salmonella paratyphi A (strain ATCC 9150 / SARB42).